Here is a 1995-residue protein sequence, read N- to C-terminus: Myosin-14 (1995 aa).

The tract at residues 1–46 (MAAVTMSVPGRKAPPRPGPVPEAAQPFLFTPRGPSAGGGPGSGTSP) is disordered. The residue at position 2 (Ala2) is an N-acetylalanine. Residues 51–101 (TARRLVWVPSELHGFEAAALRDEGEEEAEVELAESGRRLRLPRDQIQRMNP) enclose the Myosin N-terminal SH3-like domain. The residue at position 60 (Ser60) is a Phosphoserine. In terms of domain architecture, Myosin motor spans 105 to 800 (SKAEDMAELT…VLAQLEEERD (696 aa)). 198–205 (GESGAGKT) lines the ATP pocket. The actin-binding stretch occupies residues 678 to 700 (LSRLMATLSNTNPSFVRCIVPNH). Positions 803–832 (VTDIIVSFQAAARGYLARRAFQKRQQQQSA) constitute an IQ domain. A coiled-coil region spans residues 862–1947 (LQVTRQDEVL…VTTLRNRLRR (1086 aa)). Thr1194 is modified (phosphothreonine). 4 disordered regions span residues 1371–1415 (EEAA…RRAA), 1592–1623 (QHERDLQGRDEAGEERRRQLAKQLRDAEVERD), 1905–1942 (EAEEEASRAQAGRRRLQRELEDVTESAESMNREVTTLR), and 1958–1995 (RQVFRLEEGVASDEEAEEAQPGSGPSPEPEGSPPAHPQ). The segment covering 1930–1942 (SAESMNREVTTLR) has biased composition (polar residues). Residues Ser1969, Ser1980, Ser1983, and Ser1989 each carry the phosphoserine modification. Residues 1981 to 1995 (GPSPEPEGSPPAHPQ) are compositionally biased toward pro residues.

This sequence belongs to the TRAFAC class myosin-kinesin ATPase superfamily. Myosin family. In terms of assembly, myosin is a hexameric protein that consists of 2 heavy chain subunits (MHC), 2 alkali light chain subunits (MLC) and 2 regulatory light chain subunits (MLC-2). In terms of tissue distribution, high levels of expression are found in brain (highest in corpus callosum), heart, kidney, liver, lung, small intestine, colon and skeletal muscle. Expression is low in organs composed mainly of smooth muscle, such as aorta, uterus and urinary bladder. No detectable expression is found in thymus, spleen, placenta and lymphocytes.

Its function is as follows. Cellular myosin that appears to play a role in cytokinesis, cell shape, and specialized functions such as secretion and capping. This is Myosin-14 (MYH14) from Homo sapiens (Human).